A 262-amino-acid polypeptide reads, in one-letter code: Hydroxyethylthiazole kinase (262 aa).

Met-50 contacts substrate. ATP-binding residues include Arg-125 and Thr-171. Position 198 (Gly-198) interacts with substrate.

The protein belongs to the Thz kinase family. Requires Mg(2+) as cofactor.

The enzyme catalyses 5-(2-hydroxyethyl)-4-methylthiazole + ATP = 4-methyl-5-(2-phosphooxyethyl)-thiazole + ADP + H(+). It functions in the pathway cofactor biosynthesis; thiamine diphosphate biosynthesis; 4-methyl-5-(2-phosphoethyl)-thiazole from 5-(2-hydroxyethyl)-4-methylthiazole: step 1/1. Its function is as follows. Catalyzes the phosphorylation of the hydroxyl group of 4-methyl-5-beta-hydroxyethylthiazole (THZ). This chain is Hydroxyethylthiazole kinase, found in Escherichia coli O6:H1 (strain CFT073 / ATCC 700928 / UPEC).